We begin with the raw amino-acid sequence, 223 residues long: Cytidylate kinase (223 aa).

10–18 (GPAGSGKSS) is an ATP binding site.

It belongs to the cytidylate kinase family. Type 1 subfamily.

It localises to the cytoplasm. The catalysed reaction is CMP + ATP = CDP + ADP. The enzyme catalyses dCMP + ATP = dCDP + ADP. This is Cytidylate kinase from Pseudothermotoga lettingae (strain ATCC BAA-301 / DSM 14385 / NBRC 107922 / TMO) (Thermotoga lettingae).